A 196-amino-acid polypeptide reads, in one-letter code: uncharacterized protein (196 aa).

The disordered stretch occupies residues 1-21 (MQPEVEPLISPNLGAPGSHRE).

This is an uncharacterized protein from Mus musculus (Mouse).